Reading from the N-terminus, the 228-residue chain is Ribonuclease 3 (228 aa).

Positions 5–127 (LTALQERLKH…LIGAVYLDAG (123 aa)) constitute an RNase III domain. Glutamate 40 is a binding site for Mg(2+). The active site involves aspartate 44. 2 residues coordinate Mg(2+): aspartate 113 and glutamate 116. Glutamate 116 is an active-site residue. A DRBM domain is found at 154–224 (DPKTELQEWL…AAAMLIRLKA (71 aa)).

The protein belongs to the ribonuclease III family. In terms of assembly, homodimer. It depends on Mg(2+) as a cofactor.

The protein localises to the cytoplasm. The catalysed reaction is Endonucleolytic cleavage to 5'-phosphomonoester.. Functionally, digests double-stranded RNA. Involved in the processing of primary rRNA transcript to yield the immediate precursors to the large and small rRNAs (23S and 16S). Processes some mRNAs, and tRNAs when they are encoded in the rRNA operon. Processes pre-crRNA and tracrRNA of type II CRISPR loci if present in the organism. This Variovorax paradoxus (strain S110) protein is Ribonuclease 3.